The chain runs to 270 residues: Putative phosphoenolpyruvate synthase regulatory protein (270 aa).

150–157 (GVSRCGKT) contacts ADP.

It belongs to the pyruvate, phosphate/water dikinase regulatory protein family. PSRP subfamily.

It catalyses the reaction [pyruvate, water dikinase] + ADP = [pyruvate, water dikinase]-phosphate + AMP + H(+). The enzyme catalyses [pyruvate, water dikinase]-phosphate + phosphate + H(+) = [pyruvate, water dikinase] + diphosphate. Its function is as follows. Bifunctional serine/threonine kinase and phosphorylase involved in the regulation of the phosphoenolpyruvate synthase (PEPS) by catalyzing its phosphorylation/dephosphorylation. In Shewanella amazonensis (strain ATCC BAA-1098 / SB2B), this protein is Putative phosphoenolpyruvate synthase regulatory protein.